The chain runs to 388 residues: Succinate--CoA ligase [ADP-forming] subunit beta (388 aa).

The ATP-grasp domain maps to 9–244 (KSLFAEYGLP…PSQDDAREAH (236 aa)). Residues Lys-46, 53–55 (GRG), Glu-99, Thr-102, and Glu-107 each bind ATP. Mg(2+) contacts are provided by Asn-199 and Asp-213. Residues Asn-264 and 321 to 323 (GIV) each bind substrate.

The protein belongs to the succinate/malate CoA ligase beta subunit family. Heterotetramer of two alpha and two beta subunits. The cofactor is Mg(2+).

The enzyme catalyses succinate + ATP + CoA = succinyl-CoA + ADP + phosphate. It catalyses the reaction GTP + succinate + CoA = succinyl-CoA + GDP + phosphate. Its pathway is carbohydrate metabolism; tricarboxylic acid cycle; succinate from succinyl-CoA (ligase route): step 1/1. Succinyl-CoA synthetase functions in the citric acid cycle (TCA), coupling the hydrolysis of succinyl-CoA to the synthesis of either ATP or GTP and thus represents the only step of substrate-level phosphorylation in the TCA. The beta subunit provides nucleotide specificity of the enzyme and binds the substrate succinate, while the binding sites for coenzyme A and phosphate are found in the alpha subunit. This is Succinate--CoA ligase [ADP-forming] subunit beta from Shewanella sp. (strain MR-4).